The chain runs to 443 residues: Trihelix transcription factor ASIL2 (443 aa).

Positions 1-82 (MEDDEDIRSQ…RPTGGGGRED (82 aa)) are disordered. A compositionally biased stretch (polar residues) spans 38 to 48 (YSLTPPGNSSQ). Gly residues predominate over residues 64–78 (SGGGNNSSGRPTGGG). The 61-residue stretch at 84–144 (WSEAATAVLI…QCKNRIDTVK (61 aa)) folds into the Myb-like domain. 2 disordered regions span residues 238-350 (FGGS…GNKW) and 413-443 (RRMGNTSNDHHHSRKNNINAIVNNNNDLGNN). Positions 239 to 249 (GGSGGGGGGGS) are enriched in gly residues. A compositionally biased stretch (low complexity) spans 271 to 286 (TLPQQGRTLPQQQQQG). Positions 290 to 303 (KRCSESKRWRFRKR) match the Bipartite nuclear localization signal motif. Positions 333 to 350 (MKTEEKKKQDGDGVGNKW) are enriched in basic and acidic residues. Residues 360-414 (FGEAYEQTENAKLQQVVEMEKERMKFLKELELQRMQFFVKTQLEISQLKQQHGRR) are a coiled coil. Residues 428–443 (NNINAIVNNNNDLGNN) show a composition bias toward low complexity.

It localises to the nucleus. In terms of biological role, transcription regulator that may repress the maturation program during early embryogenesis. The chain is Trihelix transcription factor ASIL2 from Arabidopsis thaliana (Mouse-ear cress).